The following is a 356-amino-acid chain: Phenylalanine--tRNA ligase alpha subunit (356 aa).

Glutamate 260 contributes to the Mg(2+) binding site.

This sequence belongs to the class-II aminoacyl-tRNA synthetase family. Phe-tRNA synthetase alpha subunit type 1 subfamily. Tetramer of two alpha and two beta subunits. Mg(2+) serves as cofactor.

The protein resides in the cytoplasm. The enzyme catalyses tRNA(Phe) + L-phenylalanine + ATP = L-phenylalanyl-tRNA(Phe) + AMP + diphosphate + H(+). The protein is Phenylalanine--tRNA ligase alpha subunit of Gluconobacter oxydans (strain 621H) (Gluconobacter suboxydans).